The primary structure comprises 468 residues: Glycine--tRNA ligase (468 aa).

Substrate is bound by residues Arg-101 and Glu-170. Residues 202–204, 212–217, 289–290, and 333–336 contribute to the ATP site; these read RNE, FRTREF, EL, and GLTR. Residue 217-221 participates in substrate binding; that stretch reads FEQME. Position 329–333 (329–333) interacts with substrate; the sequence is EPAAG.

Belongs to the class-II aminoacyl-tRNA synthetase family. Homodimer.

The protein localises to the cytoplasm. It catalyses the reaction tRNA(Gly) + glycine + ATP = glycyl-tRNA(Gly) + AMP + diphosphate. Its function is as follows. Catalyzes the attachment of glycine to tRNA(Gly). The polypeptide is Glycine--tRNA ligase (Mycolicibacterium vanbaalenii (strain DSM 7251 / JCM 13017 / BCRC 16820 / KCTC 9966 / NRRL B-24157 / PYR-1) (Mycobacterium vanbaalenii)).